The sequence spans 23 residues: Toxin Acra2 (23 aa).

The LCN-type CS-alpha/beta domain occupies 2–23 (KDGYIVDSNGCAPECFPTNXGC).

Contains 4 disulfide bonds. Expressed by the venom gland.

Its subcellular location is the secreted. In terms of biological role, excitatory insect toxins induce a spastic paralysis. They bind voltage-independently at site-4 of sodium channels (Nav) and shift the voltage of activation toward more negative potentials thereby affecting sodium channel activation and promoting spontaneous and repetitive firing. Is lethal to mice. Is about 1% of the total protein in the venom. In Androctonus crassicauda (Arabian fat-tailed scorpion), this protein is Toxin Acra2.